The sequence spans 593 residues: Progranulin (593 aa).

The N-terminal stretch at Met1–Gly17 is a signal peptide. Asn118 carries an N-linked (GlcNAc...) asparagine glycan. Intrachain disulfides connect Cys126–Cys139 and Cys133–Cys149. N-linked (GlcNAc...) asparagine glycans are attached at residues Asn236 and Asn265. 10 disulfide bridges follow: Cys284–Cys296, Cys290–Cys306, Cys297–Cys314, Cys307–Cys321, Cys315–Cys328, Cys322–Cys335, Cys366–Cys378, Cys372–Cys388, Cys397–Cys410, and Cys404–Cys416. Asn368 is a glycosylation site (N-linked (GlcNAc...) asparagine). Asn530 carries N-linked (GlcNAc...) asparagine glycosylation.

Belongs to the granulin family. In terms of assembly, progranulin is secreted as a homodimer. Interacts with SLPI; interaction protects progranulin from proteolysis. Interacts (via region corresponding to granulin-7 peptide) with CTSD; stabilizes CTSD and increases its proteolytic activity. Interacts (via region corresponding to granulin-7 peptide) with SORT1; this interaction mediates endocytosis and lysosome delivery of progranulin; interaction occurs at the neuronal cell surface in a stressed nervous system. Interacts with PSAP; facilitates lysosomal delivery of progranulin from the extracellular space and the biosynthetic pathway. Forms a complex with PSAP and M6PR; PSAP bridges the binding between progranulin and M6PR. Forms a complex with PSAP and SORT1; progranulin bridges the interaction between PSAP and SORT1; facilitates lysosomal targeting of PSAP via SORT1; interaction enhances PSAP uptake in primary cortical neurons. Interacts (via regions corresponding to granulin-2 and granulin-7 peptides) with GBA1; this interaction prevents aggregation of GBA1-SCARB2 complex via interaction with HSPA1A upon stress. Interacts (via region corresponding to granulin-7 peptide) with HSPA1A; mediates recruitment of HSPA1A to GBA1 and prevents GBA1 aggregation in response to stress. Cleaved by ELANE; proteolysis is blocked by SLPI and is concentration- and time-dependent and induces CXCL8/IL-8 production; granulin-3 and granulin-4 are resistant to ELANE. Cleaved by CTSL in lysosome thus regulating the maturation and turnover of progranulin within the lysosome. As to expression, in myelogenous leukemic cell lines of promonocytic, promyelocytic, and proerythroid lineage, in fibroblasts, and very strongly in epithelial cell lines. Present in inflammatory cells and bone marrow. Highest levels in kidney.

It localises to the secreted. Its subcellular location is the lysosome. Secreted protein that acts as a key regulator of lysosomal function and as a growth factor involved in inflammation, wound healing and cell proliferation. Regulates protein trafficking to lysosomes, and also the activity of lysosomal enzymes. Also facilitates the acidification of lysosomes, causing degradation of mature CTSD by CTSB. In addition, functions as a wound-related growth factor that acts directly on dermal fibroblasts and endothelial cells to promote division, migration and the formation of capillary-like tubule structures. Also promotes epithelial cell proliferation by blocking TNF-mediated neutrophil activation preventing release of oxidants and proteases. Moreover, modulates inflammation in neurons by preserving neurons survival, axonal outgrowth and neuronal integrity. Its function is as follows. Promotes proliferation of the epithelial cell line A431 in culture. Functionally, inhibits epithelial cell proliferation and induces epithelial cells to secrete IL-8. In terms of biological role, stabilizes CTSD through interaction with CTSD leading to maintain its aspartic-type peptidase activity. The polypeptide is Progranulin (Homo sapiens (Human)).